A 236-amino-acid polypeptide reads, in one-letter code: MKKKLYEGSSKILYSAEEDFLLIMAFSDKAVLETGETVDISGKGVLNNSISSFLMGKLEMIGIENHLIEKINMREQLIQYVEVFPIQVIISSVACGRFVKEFGMDEGYVFDKPIIDFKVRSREFNYPIVNEYQIFNFGWLTMDEIRTVQAQTLRIYDFLSGLFIGIGIRLVECKLEFGRVFNGEESIIMLTDEISPDNCRLWHINSNEKLGFELIENEPNKAFESYQLIANRLKEK.

Belongs to the SAICAR synthetase family.

The enzyme catalyses 5-amino-1-(5-phospho-D-ribosyl)imidazole-4-carboxylate + L-aspartate + ATP = (2S)-2-[5-amino-1-(5-phospho-beta-D-ribosyl)imidazole-4-carboxamido]succinate + ADP + phosphate + 2 H(+). It functions in the pathway purine metabolism; IMP biosynthesis via de novo pathway; 5-amino-1-(5-phospho-D-ribosyl)imidazole-4-carboxamide from 5-amino-1-(5-phospho-D-ribosyl)imidazole-4-carboxylate: step 1/2. The protein is Phosphoribosylaminoimidazole-succinocarboxamide synthase of Rickettsia typhi (strain ATCC VR-144 / Wilmington).